We begin with the raw amino-acid sequence, 84 residues long: uncharacterized protein (84 aa).

This is an uncharacterized protein from Saccharomyces cerevisiae (strain ATCC 204508 / S288c) (Baker's yeast).